Here is a 120-residue protein sequence, read N- to C-terminus: Crustacean hyperglycemic hormones 2 (120 aa).

The first 27 residues, M1–V27, serve as a signal peptide directing secretion. 3 cysteine pairs are disulfide-bonded: C53-C89, C69-C85, and C72-C98. V118 is subject to Valine amide.

The protein belongs to the arthropod CHH/MIH/GIH/VIH hormone family.

The protein localises to the secreted. In terms of biological role, hormone found in the sinus gland of isopods and decapods which controls the blood sugar level. Has a secretagogue action over the amylase released from the midgut gland. May act as a stress hormone and may be involved in the control of molting and reproduction. This chain is Crustacean hyperglycemic hormones 2, found in Penaeus japonicus (Kuruma prawn).